Here is a 253-residue protein sequence, read N- to C-terminus: MASGSNWLSGVNVVLVMAYGSLVFVLLFIFVKRQIMRFAMKSRRGPHVPVGHNAPKDLKEEIDIRLSRVQDIKYEPQLLADDDARLLQLETQGNQSCYNYLYRMKALDAIRTSEIPFHSEGRHPRSLMGKNFRSYLLDLRNTSTPFKGVRKALIDTLLDGYETARYGTGVFGQNEYLRYQEALSELATAVKARIGSSQRHHQSAAKDLTQSPEVSPTTIQVTYLPSSQKSKRAKHFLELKSFKDNYNTLESTL.

Residues 11 to 31 (VNVVLVMAYGSLVFVLLFIFV) traverse the membrane as a helical segment.

It localises to the membrane. It is found in the golgi apparatus. The protein localises to the mitochondrion. In terms of biological role, general regulator of phagocytosis. Required to uptake Gram negative bacterium by macrophages. This Homo sapiens (Human) protein is Protein C1orf43 (C1orf43).